The chain runs to 450 residues: Phosphoglucosamine mutase (450 aa).

Ser103 acts as the Phosphoserine intermediate in catalysis. Residues Ser103, Asp243, Asp245, and Asp247 each contribute to the Mg(2+) site. A Phosphoserine modification is found at Ser103.

This sequence belongs to the phosphohexose mutase family. It depends on Mg(2+) as a cofactor. Activated by phosphorylation.

The catalysed reaction is alpha-D-glucosamine 1-phosphate = D-glucosamine 6-phosphate. Catalyzes the conversion of glucosamine-6-phosphate to glucosamine-1-phosphate. In Lactobacillus delbrueckii subsp. bulgaricus (strain ATCC BAA-365 / Lb-18), this protein is Phosphoglucosamine mutase.